A 318-amino-acid chain; its full sequence is Acetyl-coenzyme A carboxylase carboxyl transferase subunit alpha (318 aa).

The region spanning 38–292 (ALDRKAEEML…GEAIAAMLGE (255 aa)) is the CoA carboxyltransferase C-terminal domain.

This sequence belongs to the AccA family. As to quaternary structure, acetyl-CoA carboxylase is a heterohexamer composed of biotin carboxyl carrier protein (AccB), biotin carboxylase (AccC) and two subunits each of ACCase subunit alpha (AccA) and ACCase subunit beta (AccD).

Its subcellular location is the cytoplasm. It carries out the reaction N(6)-carboxybiotinyl-L-lysyl-[protein] + acetyl-CoA = N(6)-biotinyl-L-lysyl-[protein] + malonyl-CoA. Its pathway is lipid metabolism; malonyl-CoA biosynthesis; malonyl-CoA from acetyl-CoA: step 1/1. Its function is as follows. Component of the acetyl coenzyme A carboxylase (ACC) complex. First, biotin carboxylase catalyzes the carboxylation of biotin on its carrier protein (BCCP) and then the CO(2) group is transferred by the carboxyltransferase to acetyl-CoA to form malonyl-CoA. In Paracoccus denitrificans (strain Pd 1222), this protein is Acetyl-coenzyme A carboxylase carboxyl transferase subunit alpha.